The primary structure comprises 108 residues: uncharacterized protein (108 aa).

Helical transmembrane passes span 26–46, 54–74, and 84–104; these read GAVYTGEFTLYLLFIFGALII, LMTLFGLAALAFSLSVSPLIF, and INYQLFWLSIFLGAIAFCIYM.

It localises to the cell membrane. This is an uncharacterized protein from Methanocaldococcus jannaschii (strain ATCC 43067 / DSM 2661 / JAL-1 / JCM 10045 / NBRC 100440) (Methanococcus jannaschii).